Consider the following 292-residue polypeptide: Histamine N-methyltransferase (292 aa).

Residue Glu-28 participates in substrate binding. Residues Gly-60, Glu-89, Gln-94, Ser-120, and Ile-142 each coordinate S-adenosyl-L-methionine. A substrate-binding site is contributed by Asn-283.

This sequence belongs to the class I-like SAM-binding methyltransferase superfamily. HNMT family. Monomer.

It localises to the cytoplasm. The catalysed reaction is histamine + S-adenosyl-L-methionine = N(tau)-methylhistamine + S-adenosyl-L-homocysteine + H(+). Inactivates histamine by N-methylation. Plays an important role in degrading histamine and in regulating the airway response to histamine. This chain is Histamine N-methyltransferase (HNMT), found in Bos taurus (Bovine).